A 313-amino-acid chain; its full sequence is Chemotaxis protein CheV2 (313 aa).

The CheW-like domain maps to E16–P172. A Response regulatory domain is found at L193 to S313. D246 bears the 4-aspartylphosphate mark.

In terms of processing, phosphorylated; probably by transfer of CheAY phosphate group.

Functionally, plays a role in chemotaxis signal transduction system in order to colonize the host stomach. May act as a phosphate sink to control the flow of phosphate to CheAY. The sequence is that of Chemotaxis protein CheV2 from Helicobacter pylori (strain ATCC 700392 / 26695) (Campylobacter pylori).